We begin with the raw amino-acid sequence, 67 residues long: UPF0253 protein VS_2370 (67 aa).

The protein belongs to the UPF0253 family.

This is UPF0253 protein VS_2370 from Vibrio atlanticus (strain LGP32) (Vibrio splendidus (strain Mel32)).